Here is a 158-residue protein sequence, read N- to C-terminus: uncharacterized protein (158 aa).

This is an uncharacterized protein from Aedes vexans (Inland floodwater mosquito).